The sequence spans 276 residues: Large ribosomal subunit protein uL2 (276 aa).

The interval threonine 219–lysine 276 is disordered. A compositionally biased stretch (basic residues) spans lysine 258–lysine 276.

The protein belongs to the universal ribosomal protein uL2 family. Part of the 50S ribosomal subunit. Forms a bridge to the 30S subunit in the 70S ribosome.

One of the primary rRNA binding proteins. Required for association of the 30S and 50S subunits to form the 70S ribosome, for tRNA binding and peptide bond formation. It has been suggested to have peptidyltransferase activity; this is somewhat controversial. Makes several contacts with the 16S rRNA in the 70S ribosome. The chain is Large ribosomal subunit protein uL2 from Clostridioides difficile (strain 630) (Peptoclostridium difficile).